Consider the following 1247-residue polypeptide: MEFIPAQTYYNRRYQPRPWTQRPTIQVIRPKPRRSRPAGQLAQLISAVSRLALRTVPQKPRRTRKTKKQKQVKQEQQSTRNQKKKAPKQKQTQKKKRPGRRERMCMKIENDCIFEVKHEGKITGYACLVGDKVMKPAHVKGTIDNADLAKLAFKRSSKYDLECAQIPVHMKSDASKFTHEKPEGYYNWHHGAVQYSGGRFTIPTGAGKPGDSGRPIFDNKGRVVAIVLGGANEGTRTALSVVTWNKDIVTKITPEGSVEWSLALPVMCLLANTTFPCSQPPCAPCCYEKKPEETLRMLEDNVMQPGYYQLLDSALACSQHRQRRNARENFNVYKVTRPYLAHCPDCGEGHSCHSPIALERIRSEATDGTLKIQVSLQIGIKTDDSHDWTKLRYMDSHTPVDADRSGLFVRTSAPCTITGTMGHFILARCPKGETLTVGFVDSRRISHTCMHPFHHEPPLIGREKFHSRPQHGKELPCSTYVHTTAATTEEIEVHMPPDTPDYTLMTQQAGNVKITVDGQTVRYKCKCDGSNEGLITTDKVINNCKVDQCHTAVTNHKKWQYNSPLTPRNSEQGDRKGKIHIPFPLVNTTCRVPKARNPTITYGKNRVTLLLYPDHPTLLSYRSMGRIPDYHEEWITSKKEISITVPAEGLEVTWGNNDPYKYWPQLSTNGTAHGHPHEIILYYYELYPTTTIAVLAAASIVVASLVSLSLGMCICARRRCITPYELTPGATIPFLLGVLCCVKTAKAASYYEAATYLWNEQQPLFWLQLLIPLSAAIVACNCLKLLPCCCKTLTFLAVMSIGARTVSAYEHATVIPNTVGVPYKTLVSRPGYSPMVLEMELQSVTLEPTLFLDYITCEYKTITPSPYVKCCGTAECKAKNLPDYNCKVFTGVYPFMWGGAYCFCDAENTQLSEAHVEKSESCKTEFASAYRAHTASVSAKLRVFYQGNNITVSAYANGDHAVTVKDAKFVIGPLSSAWSPFDNKIVVYKGEVYNMDYPPFGAGRPGQFGDIQSRTPDSKDVYANTQLILQRPAAGAIHVPYSQAPSGFKYWLKEKGASLQHTAPFGCQIATNPVRAVNCAVGNIPVSIDIPDAAFTRVTDAPSVTDMSCEVASCTHSSDFGGAAVVKYTASKKGKCAVHSLTNAVTIREPNVDVEGTAQLQIAFSTALASAEFKVQICSTQVHCSATCHPPKDHIVNYPSPHTTLGVQDISTTAMSWVQKITGGVGLVVAIAALILIIVLCVSFSRH.

Residues 52–103 (ALRTVPQKPRRTRKTKKQKQVKQEQQSTRNQKKKAPKQKQTQKKKRPGRRER) form a disordered region. Composition is skewed to basic residues over residues 59 to 71 (KPRRTRKTKKQKQ) and 81 to 100 (NQKKKAPKQKQTQKKKRPGR). Residues 86–99 (APKQKQTQKKKRPG) form a ribosome-binding region. Cys112 and Cys127 are joined by a disulfide. In terms of domain architecture, Peptidase S3 spans 112-260 (CIFEVKHEGK…KITPEGSVEW (149 aa)). Residue His138 is the Charge relay system of the active site. The interval 154–159 (KRSSKY) is interaction with spike glycoprotein E2. Active-site charge relay system residues include Asp160 and Ser212. The functions as an uncleaved signal peptide for the precursor of protein E3/E2 stretch occupies residues 261-273 (SLALPVMCLLANT). 9 cysteine pairs are disulfide-bonded: Cys268–Cys277, Cys282–Cys286, Cys285–Cys317, Cys343–Cys449, Cys346–Cys352, Cys415–Cys429, Cys477–Cys590, Cys525–Cys549, and Cys527–Cys544. Asn272 carries an N-linked (GlcNAc...) asparagine; by host glycan. Residues 325–691 (NARENFNVYK…YYYELYPTTT (367 aa)) are Extracellular-facing. Residue Asn587 is glycosylated (N-linked (GlcNAc...) asparagine; by host). A helical transmembrane segment spans residues 692 to 712 (IAVLAAASIVVASLVSLSLGM). The Cytoplasmic segment spans residues 713–747 (CICARRRCITPYELTPGATIPFLLGVLCCVKTAKA). The interaction with the capsid protein stretch occupies residues 715–719 (CARRR). S-palmitoyl cysteine; by host attachment occurs at residues Cys720, Cys740, and Cys741. Residues 720–740 (CITPYELTPGATIPFLLGVLC) form a transient transmembrane before p62-6K protein processing region. A disulfide bridge links Cys720 with Cys741. At 748-762 (ASYYEAATYLWNEQQ) the chain is on the extracellular side. A helical transmembrane segment spans residues 763–783 (PLFWLQLLIPLSAAIVACNCL). Over 784–787 (KLLP) the chain is Cytoplasmic. Residues 788–808 (CCCKTLTFLAVMSIGARTVSA) form a helical membrane-spanning segment. Residues 809–1223 (YEHATVIPNT…AMSWVQKITG (415 aa)) are Extracellular-facing. Disulfide bonds link Cys857–Cys922, Cys870–Cys902, Cys871–Cys904, and Cys876–Cys886. Positions 892–909 (VYPFMWGGAYCFCDAENT) are E1 fusion peptide loop. N-linked (GlcNAc...) asparagine; by host glycosylation is found at Asn949 and Asn1078. 4 cysteine pairs are disulfide-bonded: Cys1067–Cys1079, Cys1109–Cys1184, Cys1114–Cys1188, and Cys1136–Cys1178. A helical transmembrane segment spans residues 1224–1244 (GVGLVVAIAALILIIVLCVSF). Cys1241 carries S-palmitoyl cysteine; by host lipidation. At 1245-1247 (SRH) the chain is on the cytoplasmic side.

In terms of assembly, homodimer. Homomultimer. Interacts with host karyopherin KPNA4; this interaction allows the nuclear import of the viral capsid protein. Interacts with spike glycoprotein E2. Interacts with host IRAK1; the interaction leads to inhibition of IRAK1-dependent signaling. As to quaternary structure, the precursor of protein E3/E2 and E1 form a heterodimer shortly after synthesis. The precursor of protein E3/E2 and E1 form a heterodimer shortly after synthesis. Processing of the precursor of protein E3/E2 into E2 and E3 results in a heterodimer of the spike glycoproteins E2 and E1. Spike at virion surface are constituted of three E2-E1 heterodimers. After target cell attachment and endocytosis, E1 change conformation to form homotrimers. Interacts with 6K protein. In terms of assembly, interacts with spike glycoprotein E1. Processing of the precursor of protein E3/E2 into E2 and E3 results in a heterodimer of the spike glycoproteins E2 and E1. Spike at virion surface are constituted of a trimer of E2-E1 heterodimers. Interacts with 6K protein. Interacts with host MXRA8; this interaction mediates virus entry. As to quaternary structure, oligomer. Interacts with spike glycoprotein E1. Interacts with spike glycoprotein E2. Structural polyprotein: Specific enzymatic cleavages in vivo yield mature proteins. Capsid protein is auto-cleaved during polyprotein translation, unmasking a signal peptide at the N-terminus of the precursor of E3/E2. The remaining polyprotein is then targeted to the host endoplasmic reticulum, where host signal peptidase cleaves it into pE2, 6K and E1 proteins. pE2 is further processed to mature E3 and E2 by host furin in trans-Golgi vesicle. In terms of processing, palmitoylated via thioester bonds. These palmitoylations may induce disruption of the C-terminus transmembrane. This would result in the reorientation of E2 C-terminus from lumenal to cytoplasmic side. Post-translationally, N-glycosylated. Palmitoylated via thioester bonds.

Its subcellular location is the virion. The protein resides in the host cytoplasm. The protein localises to the host cell membrane. It is found in the virion membrane. It localises to the host Golgi apparatus. Its subcellular location is the host trans-Golgi network. The protein resides in the host endoplasmic reticulum. The catalysed reaction is Autocatalytic release of the core protein from the N-terminus of the togavirus structural polyprotein by hydrolysis of a -Trp-|-Ser- bond.. Its function is as follows. Possesses a protease activity that results in its autocatalytic cleavage from the nascent structural protein. Following its self-cleavage, the capsid protein transiently associates with ribosomes, and within several minutes the protein binds to viral RNA and rapidly assembles into icosahedric core particles. The resulting nucleocapsid eventually associates with the cytoplasmic domain of the spike glycoprotein E2 at the cell membrane, leading to budding and formation of mature virions. In case of infection, new virions attach to target cells and after clathrin-mediated endocytosis their membrane fuses with the host endosomal membrane. This leads to the release of the nucleocapsid into the cytoplasm, followed by an uncoating event necessary for the genomic RNA to become accessible. The uncoating might be triggered by the interaction of capsid proteins with ribosomes. Binding of ribosomes would release the genomic RNA since the same region is genomic RNA-binding and ribosome-binding. Functionally, provides the signal sequence for the translocation of the precursor of protein E3/E2 to the host endoplasmic reticulum. Mediates pH protection of spike glycoprotein E1 during the transport via the secretory pathway. Plays a role in viral attachment to target host cell, by binding to the cell receptor MXRA8. Synthesized as a p62 precursor which is processed by furin at the cell membrane just before virion budding, giving rise to E2-E1 heterodimer. The p62-E1 heterodimer is stable, whereas E2-E1 is unstable and dissociate at low pH. p62 is processed at the last step, presumably to avoid E1 fusion activation before its final export to cell surface. E2 C-terminus contains a transitory transmembrane that would be disrupted by palmitoylation, resulting in reorientation of the C-terminal tail from lumenal to cytoplasmic side. This step is critical since E2 C-terminus is involved in budding by interacting with capsid proteins. This release of E2 C-terminus in cytoplasm occurs lately in protein export, and precludes premature assembly of particles at the endoplasmic reticulum membrane. In terms of biological role, acts as a viroporin that participates in virus glycoprotein processing and transport to the plasma membrane, cell permeabilization and budding of viral particles. Disrupts the calcium homeostasis of the cell, probably at the endoplasmic reticulum level. This leads to cytoplasmic calcium elevation. Because of its lipophilic properties, the 6K protein is postulated to influence the selection of lipids that interact with the transmembrane domains of the glycoproteins, which, in turn, affects the deformability of the bilayer required for the extreme curvature that occurs as budding proceeds. Present in low amount in virions, about 3% compared to viral glycoproteins. Its function is as follows. Class II viral fusion protein. Fusion activity is inactive as long as E1 is bound to E2 in mature virion. After virus attachment to target cell via host MXRA8 and endocytosis, acidification of the endosome induce dissociation of E1/E2 heterodimer and concomitant trimerization of the E1 subunits. This E1 trimer is fusion active, and promotes release of viral nucleocapsid in cytoplasm after endosome and viral membrane fusion. Efficient fusion requires the presence of cholesterol and sphingolipid in the target membrane. The protein is Structural polyprotein of O'nyong-nyong virus (strain SG650) (ONNV).